Here is a 420-residue protein sequence, read N- to C-terminus: S-adenosylmethionine synthase (420 aa).

Histidine 16 is a binding site for ATP. Aspartate 18 provides a ligand contact to Mg(2+). Glutamate 44 contacts K(+). 2 residues coordinate L-methionine: glutamate 57 and glutamine 100. Positions 100–110 are flexible loop; that stretch reads QSPDIAQGVNT. Residues 175-177, 251-252, aspartate 260, 266-267, alanine 283, and lysine 287 each bind ATP; these read DGK, KF, and RK. Position 260 (aspartate 260) interacts with L-methionine. Lysine 291 lines the L-methionine pocket.

Belongs to the AdoMet synthase family. Homotetramer; dimer of dimers. The cofactor is Mg(2+). It depends on K(+) as a cofactor.

The protein resides in the cytoplasm. The catalysed reaction is L-methionine + ATP + H2O = S-adenosyl-L-methionine + phosphate + diphosphate. It participates in amino-acid biosynthesis; S-adenosyl-L-methionine biosynthesis; S-adenosyl-L-methionine from L-methionine: step 1/1. Its function is as follows. Catalyzes the formation of S-adenosylmethionine (AdoMet) from methionine and ATP. The overall synthetic reaction is composed of two sequential steps, AdoMet formation and the subsequent tripolyphosphate hydrolysis which occurs prior to release of AdoMet from the enzyme. The protein is S-adenosylmethionine synthase of Trichormus variabilis (strain ATCC 29413 / PCC 7937) (Anabaena variabilis).